Reading from the N-terminus, the 225-residue chain is GrpE protein homolog 2, mitochondrial (225 aa).

The N-terminal 32 residues, 1–32, are a transit peptide targeting the mitochondrion; sequence MAVRSLWAGRLRVQRLLAWSAAWESKGWPLPF. Lys142 is subject to N6-acetyllysine.

It belongs to the GrpE family. Probable component of the PAM complex at least composed of a mitochondrial HSP70 protein, GRPEL1 or GRPEL2, TIMM44, TIMM16/PAM16 and TIMM14/DNAJC19.

It localises to the mitochondrion matrix. Functionally, essential component of the PAM complex, a complex required for the translocation of transit peptide-containing proteins from the inner membrane into the mitochondrial matrix in an ATP-dependent manner. Seems to control the nucleotide-dependent binding of mitochondrial HSP70 to substrate proteins. Stimulates ATPase activity of mt-HSP70. May also serve to modulate the interconversion of oligomeric (inactive) and monomeric (active) forms of mt-HSP70. The polypeptide is GrpE protein homolog 2, mitochondrial (GRPEL2) (Homo sapiens (Human)).